The chain runs to 363 residues: S-adenosylmethionine:tRNA ribosyltransferase-isomerase (363 aa).

Belongs to the QueA family. As to quaternary structure, monomer.

The protein localises to the cytoplasm. The enzyme catalyses 7-aminomethyl-7-carbaguanosine(34) in tRNA + S-adenosyl-L-methionine = epoxyqueuosine(34) in tRNA + adenine + L-methionine + 2 H(+). It participates in tRNA modification; tRNA-queuosine biosynthesis. Its function is as follows. Transfers and isomerizes the ribose moiety from AdoMet to the 7-aminomethyl group of 7-deazaguanine (preQ1-tRNA) to give epoxyqueuosine (oQ-tRNA). This chain is S-adenosylmethionine:tRNA ribosyltransferase-isomerase, found in Brucella abortus (strain S19).